The following is a 108-amino-acid chain: Nucleoid-associated protein GK0018 (108 aa).

Residues 1-32 (MMRGGMGNMQKMLKQMQKMQKEMQKAQEELAE) are disordered. A compositionally biased stretch (low complexity) spans 9-18 (MQKMLKQMQK). Residues 19–32 (MQKEMQKAQEELAE) are compositionally biased toward basic and acidic residues.

It belongs to the YbaB/EbfC family. In terms of assembly, homodimer.

It localises to the cytoplasm. The protein resides in the nucleoid. Functionally, binds to DNA and alters its conformation. May be involved in regulation of gene expression, nucleoid organization and DNA protection. This is Nucleoid-associated protein GK0018 from Geobacillus kaustophilus (strain HTA426).